A 187-amino-acid chain; its full sequence is Adenylate kinase (187 aa).

Gly10–Thr15 serves as a coordination point for ATP. The tract at residues Ser30 to Val59 is NMP. AMP is bound by residues Thr31, Arg36, Asn57–Val59, Gly85–Arg88, and Gln92. Residues Gly126–Asp136 are LID. Arg127 is a binding site for ATP. 2 residues coordinate AMP: Arg133 and Arg144. Residue Gly172 participates in ATP binding.

It belongs to the adenylate kinase family. Monomer.

Its subcellular location is the cytoplasm. It carries out the reaction AMP + ATP = 2 ADP. It functions in the pathway purine metabolism; AMP biosynthesis via salvage pathway; AMP from ADP: step 1/1. Catalyzes the reversible transfer of the terminal phosphate group between ATP and AMP. Plays an important role in cellular energy homeostasis and in adenine nucleotide metabolism. The sequence is that of Adenylate kinase from Stenotrophomonas maltophilia (strain R551-3).